Consider the following 101-residue polypeptide: Urease subunit beta (101 aa).

This sequence belongs to the urease beta subunit family. As to quaternary structure, heterotrimer of UreA (gamma), UreB (beta) and UreC (alpha) subunits. Three heterotrimers associate to form the active enzyme.

Its subcellular location is the cytoplasm. It catalyses the reaction urea + 2 H2O + H(+) = hydrogencarbonate + 2 NH4(+). The protein operates within nitrogen metabolism; urea degradation; CO(2) and NH(3) from urea (urease route): step 1/1. This Stutzerimonas stutzeri (strain A1501) (Pseudomonas stutzeri) protein is Urease subunit beta.